The following is a 124-amino-acid chain: Alpha-amylase inhibitor 0.53 (124 aa).

4 disulfides stabilise this stretch: Cys-20–Cys-41, Cys-28–Cys-83, Cys-42–Cys-99, and Cys-54–Cys-115.

It belongs to the protease inhibitor I6 (cereal trypsin/alpha-amylase inhibitor) family. In terms of assembly, homodimer. Post-translationally, the disulfide bonds are essential for the inhibitor activity. Endosperm.

The protein localises to the secreted. Alpha-amylase inhibitor. This Triticum aestivum (Wheat) protein is Alpha-amylase inhibitor 0.53.